Consider the following 159-residue polypeptide: NADH-quinone oxidoreductase subunit B (159 aa).

4 residues coordinate [4Fe-4S] cluster: cysteine 37, cysteine 38, cysteine 102, and cysteine 132.

This sequence belongs to the complex I 20 kDa subunit family. As to quaternary structure, NDH-1 is composed of 14 different subunits. Subunits NuoB, C, D, E, F, and G constitute the peripheral sector of the complex. The cofactor is [4Fe-4S] cluster.

The protein resides in the cell inner membrane. The enzyme catalyses a quinone + NADH + 5 H(+)(in) = a quinol + NAD(+) + 4 H(+)(out). Functionally, NDH-1 shuttles electrons from NADH, via FMN and iron-sulfur (Fe-S) centers, to quinones in the respiratory chain. Couples the redox reaction to proton translocation (for every two electrons transferred, four hydrogen ions are translocated across the cytoplasmic membrane), and thus conserves the redox energy in a proton gradient. This is NADH-quinone oxidoreductase subunit B from Polaromonas naphthalenivorans (strain CJ2).